The chain runs to 89 residues: DNA/RNA-binding protein Alba 2 (89 aa).

K12 carries the post-translational modification N6-acetyllysine.

This sequence belongs to the histone-like Alba family. In terms of processing, acetylated. Acetylation at Lys-12 decreases DNA-binding affinity.

The protein resides in the cytoplasm. It localises to the chromosome. Functionally, binds double-stranded DNA tightly but without sequence specificity. Involved in DNA compaction. This is DNA/RNA-binding protein Alba 2 from Saccharolobus shibatae (strain ATCC 51178 / DSM 5389 / JCM 8931 / NBRC 15437 / B12) (Sulfolobus shibatae).